Reading from the N-terminus, the 141-residue chain is Large ribosomal subunit protein uL13 (141 aa).

Belongs to the universal ribosomal protein uL13 family. As to quaternary structure, part of the 50S ribosomal subunit.

In terms of biological role, this protein is one of the early assembly proteins of the 50S ribosomal subunit, although it is not seen to bind rRNA by itself. It is important during the early stages of 50S assembly. This chain is Large ribosomal subunit protein uL13, found in Helicobacter pylori (strain G27).